A 244-amino-acid polypeptide reads, in one-letter code: 7-cyano-7-deazaguanine synthase (244 aa).

14–24 (FSGGQDSATCL) is an ATP binding site. Zn(2+) contacts are provided by cysteine 202, cysteine 217, cysteine 220, and cysteine 223.

This sequence belongs to the QueC family. Requires Zn(2+) as cofactor.

The catalysed reaction is 7-carboxy-7-deazaguanine + NH4(+) + ATP = 7-cyano-7-deazaguanine + ADP + phosphate + H2O + H(+). The protein operates within purine metabolism; 7-cyano-7-deazaguanine biosynthesis. Its function is as follows. Catalyzes the ATP-dependent conversion of 7-carboxy-7-deazaguanine (CDG) to 7-cyano-7-deazaguanine (preQ(0)). This is 7-cyano-7-deazaguanine synthase from Paraburkholderia phytofirmans (strain DSM 17436 / LMG 22146 / PsJN) (Burkholderia phytofirmans).